The following is a 371-amino-acid chain: N-methyl-L-tryptophan oxidase (371 aa).

Residue 4 to 34 (DLIVIGSGSVGSAAGYYASQAGLNVLMIDSA) participates in FAD binding. Cys307 is subject to S-8alpha-FAD cysteine.

This sequence belongs to the MSOX/MTOX family. MTOX subfamily. In terms of assembly, monomer. FAD is required as a cofactor.

It catalyses the reaction N(alpha)-methyl-L-tryptophan + O2 + H2O = L-tryptophan + formaldehyde + H2O2. Functionally, catalyzes the oxidative demethylation of N-methyl-L-tryptophan. The sequence is that of N-methyl-L-tryptophan oxidase from Yersinia pseudotuberculosis serotype O:1b (strain IP 31758).